A 699-amino-acid chain; its full sequence is Elongation factor G (699 aa).

The region spanning Asn-8 to Val-290 is the tr-type G domain. GTP is bound by residues Ala-17–Thr-24, Asp-88–His-92, and Asn-142–Asp-145.

This sequence belongs to the TRAFAC class translation factor GTPase superfamily. Classic translation factor GTPase family. EF-G/EF-2 subfamily.

The protein localises to the cytoplasm. Functionally, catalyzes the GTP-dependent ribosomal translocation step during translation elongation. During this step, the ribosome changes from the pre-translocational (PRE) to the post-translocational (POST) state as the newly formed A-site-bound peptidyl-tRNA and P-site-bound deacylated tRNA move to the P and E sites, respectively. Catalyzes the coordinated movement of the two tRNA molecules, the mRNA and conformational changes in the ribosome. The protein is Elongation factor G of Dichelobacter nodosus (strain VCS1703A).